We begin with the raw amino-acid sequence, 200 residues long: Nucleoside triphosphate pyrophosphatase (200 aa).

The active-site Proton acceptor is the aspartate 75.

Belongs to the Maf family. The cofactor is a divalent metal cation.

It is found in the cytoplasm. The catalysed reaction is a ribonucleoside 5'-triphosphate + H2O = a ribonucleoside 5'-phosphate + diphosphate + H(+). The enzyme catalyses a 2'-deoxyribonucleoside 5'-triphosphate + H2O = a 2'-deoxyribonucleoside 5'-phosphate + diphosphate + H(+). Functionally, nucleoside triphosphate pyrophosphatase. May have a dual role in cell division arrest and in preventing the incorporation of modified nucleotides into cellular nucleic acids. This chain is Nucleoside triphosphate pyrophosphatase, found in Synechococcus sp. (strain CC9311).